Reading from the N-terminus, the 1624-residue chain is NAD-specific glutamate dehydrogenase (1624 aa).

The active site involves Lys-845.

This sequence belongs to the Glu/Leu/Phe/Val dehydrogenases family. In terms of assembly, interacts with (unphosphorylated) GarA.

It catalyses the reaction L-glutamate + NAD(+) + H2O = 2-oxoglutarate + NH4(+) + NADH + H(+). With respect to regulation, activity is inhibited by unphosphorylated GarA. Its function is as follows. Catalyzes the reversible conversion of L-glutamate to 2-oxoglutarate. This is NAD-specific glutamate dehydrogenase (gdh) from Mycobacterium tuberculosis (strain ATCC 25618 / H37Rv).